Reading from the N-terminus, the 802-residue chain is Phenylalanine--tRNA ligase beta subunit (802 aa).

Residues 39–150 (AKALKPFTIA…ADAPIGAAYA (112 aa)) enclose the tRNA-binding domain. Residues 400-475 (GDDRVIDFPV…RIYGVDKVPM (76 aa)) enclose the B5 domain. Residues aspartate 453, aspartate 459, glutamate 462, and glutamate 463 each coordinate Mg(2+). The FDX-ACB domain maps to 708–801 (SAFQPVSRDF…VTKKTGGTLR (94 aa)).

This sequence belongs to the phenylalanyl-tRNA synthetase beta subunit family. Type 1 subfamily. Tetramer of two alpha and two beta subunits. The cofactor is Mg(2+).

The protein resides in the cytoplasm. The catalysed reaction is tRNA(Phe) + L-phenylalanine + ATP = L-phenylalanyl-tRNA(Phe) + AMP + diphosphate + H(+). The polypeptide is Phenylalanine--tRNA ligase beta subunit (Bradyrhizobium diazoefficiens (strain JCM 10833 / BCRC 13528 / IAM 13628 / NBRC 14792 / USDA 110)).